The primary structure comprises 956 residues: Plasma membrane ATPase 3 (956 aa).

The Cytoplasmic segment spans residues 1–65; the sequence is MGEKPEVLDA…EKKESKFSKF (65 aa). The helical transmembrane segment at 66-85 threads the bilayer; it reads LGFMWNPLSWVMEAAAIMAI. Residues 86–97 lie on the Extracellular side of the membrane; that stretch reads ALANGGGKPPDW. A helical membrane pass occupies residues 98 to 118; it reads QDFVGIITLLIINSTISFIEE. At 119–247 the chain is on the cytoplasmic side; it reads NNAGNAAAAL…GHFQKVLTAI (129 aa). The chain crosses the membrane as a helical span at residues 248–268; sequence GNFCICSIAVGMIIEIIVMYP. At 269–278 the chain is on the extracellular side; that stretch reads IQHRKYRPGI. The chain crosses the membrane as a helical span at residues 279 to 300; it reads DNLLVLLIGGIPIAMPTVLSVT. The Cytoplasmic portion of the chain corresponds to 301 to 647; it reads MAIGSHRLAQ…TSRAIFQRMK (347 aa). Asp333 acts as the 4-aspartylphosphate intermediate in catalysis. 2 residues coordinate Mg(2+): Asp592 and Asp596. The chain crosses the membrane as a helical span at residues 648-669; that stretch reads NYTIYAVSITIRIVLGFMLLAL. The Extracellular segment spans residues 670-674; the sequence is IWQFD. The helical transmembrane segment at 675–697 threads the bilayer; that stretch reads FPPFMVLIIAILNDGTIMTISKD. Topologically, residues 698 to 713 are cytoplasmic; the sequence is RVKPSPLPDSWKLAEI. Residues 714–734 traverse the membrane as a helical segment; sequence FTTGVVLGGYLAMMTVIFFWA. The Extracellular portion of the chain corresponds to 735–759; that stretch reads AYKTNFFPRVFGVSTLEKTATDDFR. The helical transmembrane segment at 760 to 780 threads the bilayer; sequence KLASAIYLQVSTISQALIFVT. The Cytoplasmic segment spans residues 781–792; that stretch reads RSRSWSFMERPG. Residues 793-813 traverse the membrane as a helical segment; that stretch reads LLLVVAFFIAQLVATLIAVYA. The Extracellular portion of the chain corresponds to 814 to 822; that stretch reads NWSFAAIEG. A helical membrane pass occupies residues 823-843; it reads IGWGWAGVIWLYNIVFYIPLD. At 844-956 the chain is on the cytoplasmic side; it reads LXXFLIRYAL…IETIQQAYTV (113 aa).

The protein belongs to the cation transport ATPase (P-type) (TC 3.A.3) family. Type IIIA subfamily. Expressed in roots, stems, leaves from both vegetative and flowering plants, and flowers at early and late stages of development with highest expression levels found in flowers and root tissue.

It localises to the cell membrane. It catalyses the reaction ATP + H2O + H(+)(in) = ADP + phosphate + 2 H(+)(out). The plasma membrane ATPase of plants and fungi is a hydrogen ion pump. The proton gradient it generates drives the active transport of nutrients by H(+)-symport. The resulting external acidification and/or internal alkinization may mediate growth responses. This chain is Plasma membrane ATPase 3 (PMA3), found in Nicotiana plumbaginifolia (Leadwort-leaved tobacco).